The primary structure comprises 436 residues: GTPase Obg (436 aa).

The region spanning 2 to 160 is the Obg domain; it reads SMFLDTAKIK…RELQLELKIL (159 aa). The region spanning 161-338 is the OBG-type G domain; it reads ADVGLVGFPS…LLDATAELLD (178 aa). GTP-binding positions include 167 to 174, 192 to 196, 214 to 217, 284 to 287, and 319 to 321; these read GFPSVGKS, FTTIV, DLPG, NKMD, and SGL. 2 residues coordinate Mg(2+): S174 and T194. One can recognise an OCT domain in the interval 358 to 436; sequence GFDEEEKAFE…IGKFEFEFVD (79 aa).

Belongs to the TRAFAC class OBG-HflX-like GTPase superfamily. OBG GTPase family. In terms of assembly, monomer. Mg(2+) is required as a cofactor.

It is found in the cytoplasm. Functionally, an essential GTPase which binds GTP, GDP and possibly (p)ppGpp with moderate affinity, with high nucleotide exchange rates and a fairly low GTP hydrolysis rate. Plays a role in control of the cell cycle, stress response, ribosome biogenesis and in those bacteria that undergo differentiation, in morphogenesis control. This chain is GTPase Obg, found in Streptococcus pneumoniae serotype 2 (strain D39 / NCTC 7466).